Consider the following 447-residue polypeptide: Phosphoglucosamine mutase (447 aa).

Ser-103 acts as the Phosphoserine intermediate in catalysis. The Mg(2+) site is built by Ser-103, Asp-242, Asp-244, and Asp-246. At Ser-103 the chain carries Phosphoserine.

Belongs to the phosphohexose mutase family. Mg(2+) is required as a cofactor. In terms of processing, activated by phosphorylation.

It catalyses the reaction alpha-D-glucosamine 1-phosphate = D-glucosamine 6-phosphate. Catalyzes the conversion of glucosamine-6-phosphate to glucosamine-1-phosphate. The polypeptide is Phosphoglucosamine mutase (Marinobacter nauticus (strain ATCC 700491 / DSM 11845 / VT8) (Marinobacter aquaeolei)).